We begin with the raw amino-acid sequence, 177 residues long: UPF0177 protein YxdF (177 aa).

The next 4 helical transmembrane spans lie at 2-22, 30-50, 117-137, and 152-172; these read TLVL…KNTL, IFWL…VTVL, ALVH…SFII, and IVHS…DTFF.

Belongs to the UPF0177 family.

Its subcellular location is the cell membrane. In Lactococcus lactis subsp. lactis (strain IL1403) (Streptococcus lactis), this protein is UPF0177 protein YxdF (yxdF).